Reading from the N-terminus, the 433-residue chain is SPI-2 type 3 secretion system ATPase (433 aa).

ATP is bound at residue 165-170 (GVGKST).

It belongs to the ATPase alpha/beta chains family. T3SS ATPase subfamily. In terms of assembly, the core secretion machinery of the T3SS is composed of approximately 20 different proteins, including cytoplasmic components, a base, an export apparatus and a needle. This subunit is part of the cytosolic complex. Forms homohexamers. Forms a complex with SsaK/SctL (stator protein) and SsaQ/SctQ (the major sorting platform component). Interacts with the T3SS-2 specific chaperones SsaE, SseA, SscA, SscB, and SrcA.

It is found in the cytoplasm. The enzyme catalyses ATP + H2O + cellular proteinSide 1 = ADP + phosphate + cellular proteinSide 2.. In terms of biological role, ATPase component of the type III secretion system (T3SS), also called injectisome, which is used to inject bacterial effector proteins into eukaryotic host cells. Acts as a molecular motor to provide the energy that is required for the export of proteins. Required for type III secretion apparatus (T3SA) formation, secretion of a subset of SPI-2 effectors and virulence. May play a critical role in T3SS substrate recognition, disassembly of the effector/chaperone complex and unfolding of the effector in an ATP-dependent manner prior to secretion. Releases the effector protein SseB from the T3SS-2 specific chaperone SsaE in an ATP-dependent manner. The polypeptide is SPI-2 type 3 secretion system ATPase (Salmonella typhimurium (strain LT2 / SGSC1412 / ATCC 700720)).